The chain runs to 415 residues: Imidazolonepropionase (415 aa).

Residues His76 and His78 each coordinate Fe(3+). 2 residues coordinate Zn(2+): His76 and His78. Residues Arg85, Tyr148, and His181 each contribute to the 4-imidazolone-5-propanoate site. Tyr148 serves as a coordination point for N-formimidoyl-L-glutamate. His246 is a Fe(3+) binding site. Residue His246 participates in Zn(2+) binding. Glu249 lines the 4-imidazolone-5-propanoate pocket. Asp320 contributes to the Fe(3+) binding site. Asp320 serves as a coordination point for Zn(2+). N-formimidoyl-L-glutamate contacts are provided by Asn322 and Gly324. Residue Thr325 coordinates 4-imidazolone-5-propanoate.

It belongs to the metallo-dependent hydrolases superfamily. HutI family. Zn(2+) serves as cofactor. The cofactor is Fe(3+).

It is found in the cytoplasm. The catalysed reaction is 4-imidazolone-5-propanoate + H2O = N-formimidoyl-L-glutamate. Its pathway is amino-acid degradation; L-histidine degradation into L-glutamate; N-formimidoyl-L-glutamate from L-histidine: step 3/3. Functionally, catalyzes the hydrolytic cleavage of the carbon-nitrogen bond in imidazolone-5-propanoate to yield N-formimidoyl-L-glutamate. It is the third step in the universal histidine degradation pathway. The sequence is that of Imidazolonepropionase from Thermoanaerobacter pseudethanolicus (strain ATCC 33223 / 39E) (Clostridium thermohydrosulfuricum).